The sequence spans 205 residues: Lipoprotein MlpB (205 aa).

An N-terminal signal peptide occupies residues 1 to 17; it reads MKIINILFCLLLIVLNS. The N-palmitoyl cysteine moiety is linked to residue Cys-18. Cys-18 carries the S-diacylglycerol cysteine lipid modification.

It belongs to the Multicopy lipoprotein (Mlp) family.

It localises to the cell outer membrane. An outer membrane protein that may participate in pathogenesis. Some human Lyme disease patients have antibodies against this protein. The Mlp proteins probably undergo intragenic recombination, generating new alleles. In Borreliella burgdorferi (strain ATCC 35210 / DSM 4680 / CIP 102532 / B31) (Borrelia burgdorferi), this protein is Lipoprotein MlpB.